A 603-amino-acid chain; its full sequence is Aspartate--tRNA(Asp/Asn) ligase (603 aa).

E187 provides a ligand contact to L-aspartate. The segment at 211–214 (QQFK) is aspartate. L-aspartate contacts are provided by R233 and H461. Residue 233–235 (RDE) participates in ATP binding. An ATP-binding site is contributed by E495. Residue R502 participates in L-aspartate binding. 547–550 (GLDR) provides a ligand contact to ATP.

Belongs to the class-II aminoacyl-tRNA synthetase family. Type 1 subfamily. Homodimer.

It is found in the cytoplasm. It carries out the reaction tRNA(Asx) + L-aspartate + ATP = L-aspartyl-tRNA(Asx) + AMP + diphosphate. Functionally, aspartyl-tRNA synthetase with relaxed tRNA specificity since it is able to aspartylate not only its cognate tRNA(Asp) but also tRNA(Asn). Reaction proceeds in two steps: L-aspartate is first activated by ATP to form Asp-AMP and then transferred to the acceptor end of tRNA(Asp/Asn). The polypeptide is Aspartate--tRNA(Asp/Asn) ligase (Chlorobaculum parvum (strain DSM 263 / NCIMB 8327) (Chlorobium vibrioforme subsp. thiosulfatophilum)).